The primary structure comprises 425 residues: Serine--tRNA ligase (425 aa).

233–235 is a binding site for L-serine; that stretch reads TAE. 264–266 is a binding site for ATP; the sequence is RRE. Position 287 (E287) interacts with L-serine. 351–354 serves as a coordination point for ATP; it reads EISS. S385 is a binding site for L-serine.

The protein belongs to the class-II aminoacyl-tRNA synthetase family. Type-1 seryl-tRNA synthetase subfamily. In terms of assembly, homodimer. The tRNA molecule binds across the dimer.

It localises to the cytoplasm. The catalysed reaction is tRNA(Ser) + L-serine + ATP = L-seryl-tRNA(Ser) + AMP + diphosphate + H(+). It carries out the reaction tRNA(Sec) + L-serine + ATP = L-seryl-tRNA(Sec) + AMP + diphosphate + H(+). It functions in the pathway aminoacyl-tRNA biosynthesis; selenocysteinyl-tRNA(Sec) biosynthesis; L-seryl-tRNA(Sec) from L-serine and tRNA(Sec): step 1/1. Catalyzes the attachment of serine to tRNA(Ser). Is also able to aminoacylate tRNA(Sec) with serine, to form the misacylated tRNA L-seryl-tRNA(Sec), which will be further converted into selenocysteinyl-tRNA(Sec). This chain is Serine--tRNA ligase, found in Prochlorococcus marinus (strain MIT 9215).